The following is a 220-amino-acid chain: 2-hydroxy-3-keto-5-methylthiopentenyl-1-phosphate phosphatase (220 aa).

It belongs to the HAD-like hydrolase superfamily. MtnX family.

It catalyses the reaction 2-hydroxy-5-methylsulfanyl-3-oxopent-1-enyl phosphate + H2O = 1,2-dihydroxy-5-(methylsulfanyl)pent-1-en-3-one + phosphate. Its pathway is amino-acid biosynthesis; L-methionine biosynthesis via salvage pathway; L-methionine from S-methyl-5-thio-alpha-D-ribose 1-phosphate: step 4/6. In terms of biological role, dephosphorylates 2-hydroxy-3-keto-5-methylthiopentenyl-1-phosphate (HK-MTPenyl-1-P) yielding 1,2-dihydroxy-3-keto-5-methylthiopentene (DHK-MTPene). The chain is 2-hydroxy-3-keto-5-methylthiopentenyl-1-phosphate phosphatase from Geobacillus kaustophilus (strain HTA426).